We begin with the raw amino-acid sequence, 218 residues long: Small ribosomal subunit protein uS3c (218 aa).

The 72-residue stretch at 47-118 (VQKNMRTSSG…KLNIAVTRIA (72 aa)) folds into the KH type-2 domain.

The protein belongs to the universal ribosomal protein uS3 family. As to quaternary structure, part of the 30S ribosomal subunit.

The protein localises to the plastid. It localises to the chloroplast. The polypeptide is Small ribosomal subunit protein uS3c (rps3) (Nicotiana tomentosiformis (Tobacco)).